The primary structure comprises 411 residues: Signal-transducing adaptor protein 2 (411 aa).

The PH domain occupies 20 to 120 (HYYESFLEKK…GFILTVVELR (101 aa)). A Phosphotyrosine modification is found at Tyr22. In terms of domain architecture, SH2 spans 152–248 (WCFLQVSRLE…RALVPFLLDE (97 aa)). Position 250 is a phosphotyrosine; by PTK6 (Tyr250). Residues 291–320 (VPVSVSSQEDKLPQLPPLPQLPDTDENYVT) are disordered. Phosphotyrosine occurs at positions 318 and 330. The interval 338–364 (SSQAVPLKPKKPARLPAKPPKPSVVPK) is disordered. Residues 390 to 410 (TRLGDITAELEEKLQKRRALE) are a coiled coil.

In terms of assembly, interacts with PTK6 and CSF1R. Phosphorylated on tyrosine. Phosphorylated by PTK6 at Tyr-250 modulates PTK6-mediated STAT3 activation. In terms of tissue distribution, widely expressed.

It is found in the cytoplasm. The protein resides in the membrane. Substrate of protein kinase PTK6. May play a regulatory role in the acute-phase response in systemic inflammation and may modulate STAT3 activity. The chain is Signal-transducing adaptor protein 2 (Stap2) from Mus musculus (Mouse).